The primary structure comprises 185 residues: Pericyclase pydY (185 aa).

The protein belongs to the pericyclase pydY family.

Its pathway is mycotoxin biosynthesis. In terms of biological role, pericyclase; part of the gene cluster that mediates the biosynthesis of pyrrocidines, fungal natural products containing a macrocyclic para-cyclophane connected to a decahydrofluorene ring system that show potent antibiotic activities toward Gram-negative bacteria. Within the pathway, pydY is involved in the late Diels-Alder cycloaddition step that leads to the formation of the decahydrofluorene core. The pathway begins with the PKS-NRPS pydA which, with the help of the trans-enoyl reductase pydC, synthesizes the polyketide-tyrosyl acyl thioester product which can be reductively off-loaded by the terminal reductase (R) domain in pydA. The alpha/beta hydrolase pydG is then required to catalyze the subsequent Knoevenagel condensation that affords the 3-pyrrolin-2-one ring, whereas the four proteins pydB, pydE, pydX and pydZ then function synergistically to form the cyclophane. PydB and the membrane-bound pydX and pydZ are lipid-binding proteins that can sequester and mold the pdyG product into the inverse S-shape. Binding of the medium chain reductase pydE to the complex would trigger the cascade oxidative cyclization. PydY is involved in the Diels-Alder cycloaddition that forms the decahydrofluorene core. Additional non-enzymatic hydroxylation yields pyrrocidine A2 which can be further reduced into pyrrocidine B by an endogenous reductase. In Acremonium sp, this protein is Pericyclase pydY.